The primary structure comprises 353 residues: Peroxisome assembly protein 12-A (353 aa).

The Peroxisomal matrix portion of the chain corresponds to 1-19; it reads MAERGAHITTTSASDDRPS. A helical membrane pass occupies residues 20-47; that stretch reads IFEVVAQESLMAAARPALHHIVKVLAES. The Cytoplasmic segment spans residues 48–51; that stretch reads NPSR. The helical transmembrane segment at 52–76 threads the bilayer; that stretch reads YGTLWRWFDELYTLLDWLLQQHYLS. Residues 77–104 lie on the Peroxisomal matrix side of the membrane; sequence WASASFSENFYGLKRITLGKEVGQRNLP. A helical transmembrane segment spans residues 105-134; the sequence is RKEYWKSLLLLVLIPYLRVKLEKIVNRLRE. Residues 135–139 are Cytoplasmic-facing; sequence EQDYS. A helical transmembrane segment spans residues 140–178; the sequence is IQNPTSFHKRCYKAILASYPFVKLGWEAWFLFYQLRYIL. Residues 179-243 lie on the Peroxisomal matrix side of the membrane; the sequence is WNGKNHSPLL…LGAVALSVSS (65 aa). Residues 244–271 traverse the membrane as a helical segment; it reads SLSLGVFFLQFLDWWYSAENQETLKSLN. The Cytoplasmic segment spans residues 272–353; that stretch reads NLPVPPPPIH…HLIKLYTPDG (82 aa). Residues C298, C301, C319, and C322 each coordinate Zn(2+). The RING-type; degenerate zinc-finger motif lies at 298-337; it reads CPLCRKVRVNDTALGTSGYVFCYRCAYYYVKTHQRCPVSG.

It belongs to the pex2/pex10/pex12 family. In terms of assembly, component of the PEX2-PEX10-PEX12 retrotranslocation channel.

It localises to the peroxisome membrane. It functions in the pathway protein modification; protein ubiquitination. Component of a retrotranslocation channel required for peroxisome organization by mediating export of the PEX5 receptor from peroxisomes to the cytosol, thereby promoting PEX5 recycling. The retrotranslocation channel is composed of PEX2, PEX10 and PEX12; each subunit contributing transmembrane segments that coassemble into an open channel that specifically allows the passage of PEX5 through the peroxisomal membrane. PEX12 also regulates PEX5 recycling by activating the E3 ubiquitin-protein ligase activity of PEX10. When PEX5 recycling is compromised, PEX12 stimulates PEX10-mediated polyubiquitination of PEX5, leading to its subsequent degradation. In Xenopus laevis (African clawed frog), this protein is Peroxisome assembly protein 12-A.